Reading from the N-terminus, the 315-residue chain is MHRVRKTNYFYFDNTRLDLADEDFEYFKQLLIDNNIDELCQEMCNKNKVDCFISYLVVIDDLDNFILITDRTDTYIHSNECRYFRMAVYNNSYDIAKYLLENGANVHVCNSYAITCASGFGKFYVFHSEKKEKRDTVELVKLLIDYNAMVGTDTCNLVHTAIDANRLDVVKILVENGADIFSNQSKLLKSAVMYNYDILEYLISQGIDVTDDNNSVLKFAVSRGYDCVDLLLDAGADMNTLRREDVSKAILMKGSEIIETLNNNGYDFECLNGFSNTIIDTHTSKIINILNNRVSMTDVASILLYNSKYDDNYRK.

5 ANK repeats span residues 79–108 (NECR…NVHV), 118–152 (SGFG…MVGT), 153–182 (DTCN…DIFS), 184–211 (QSKL…DVTD), and 212–240 (DNNS…DMNT).

This is Putative ankyrin repeat protein R600 from Acanthamoeba polyphaga mimivirus (APMV).